Reading from the N-terminus, the 107-residue chain is Ornithine carbamoyltransferase, catabolic (107 aa).

Residues 57 to 61 and glutamine 84 contribute to the carbamoyl phosphate site; that span reads STRTR.

It belongs to the aspartate/ornithine carbamoyltransferase superfamily. OTCase family.

The protein localises to the cytoplasm. The enzyme catalyses carbamoyl phosphate + L-ornithine = L-citrulline + phosphate + H(+). The protein operates within amino-acid degradation; L-arginine degradation via ADI pathway; carbamoyl phosphate from L-arginine: step 2/2. The chain is Ornithine carbamoyltransferase, catabolic (arcB) from Streptococcus pyogenes.